Consider the following 374-residue polypeptide: Chaperone protein DnaJ (374 aa).

A J domain is found at 5 to 70 (DFYEILGLGK…QKRDAYDRYG (66 aa)). Positions 28-47 (LAMKHHPDRNPDSKGAEDKF) are disordered. The span at 35 to 47 (DRNPDSKGAEDKF) shows a compositional bias: basic and acidic residues. A CR-type zinc finger spans residues 134–212 (GYDTTIRVPS…CSGAGKIKRN (79 aa)). Positions 147, 150, 164, 167, 186, 189, 200, and 203 each coordinate Zn(2+). CXXCXGXG motif repeat units follow at residues 147 to 154 (CETCDGSG), 164 to 171 (CTTCGGHG), 186 to 193 (CPKCHGSG), and 200 to 207 (CTACSGAG).

Belongs to the DnaJ family. In terms of assembly, homodimer. Requires Zn(2+) as cofactor.

It localises to the cytoplasm. Participates actively in the response to hyperosmotic and heat shock by preventing the aggregation of stress-denatured proteins and by disaggregating proteins, also in an autonomous, DnaK-independent fashion. Unfolded proteins bind initially to DnaJ; upon interaction with the DnaJ-bound protein, DnaK hydrolyzes its bound ATP, resulting in the formation of a stable complex. GrpE releases ADP from DnaK; ATP binding to DnaK triggers the release of the substrate protein, thus completing the reaction cycle. Several rounds of ATP-dependent interactions between DnaJ, DnaK and GrpE are required for fully efficient folding. Also involved, together with DnaK and GrpE, in the DNA replication of plasmids through activation of initiation proteins. This chain is Chaperone protein DnaJ, found in Herminiimonas arsenicoxydans.